Reading from the N-terminus, the 424-residue chain is Protein shisa-9 (424 aa).

The signal sequence occupies residues 1 to 23 (MRRVLRLLLGCFLTELCARMCRA). The Extracellular portion of the chain corresponds to 24–149 (QERSGHGQLA…DPLHDPTKDK (126 aa)). 3 N-linked (GlcNAc...) asparagine glycosylation sites follow: Asn-45, Asn-89, and Asn-116. A helical transmembrane segment spans residues 150-170 (TNLIVYIICGVVAVMVLVGIF). Over 171-424 (TKLGLEKAHR…ITNSKTEVTV (254 aa)) the chain is Cytoplasmic. Disordered stretches follow at residues 333 to 373 (PRAF…TWDP) and 389 to 424 (LGIA…EVTV). Composition is skewed to polar residues over residues 362–373 (YNSTANFKTWDP) and 402–424 (TRTQ…EVTV).

It belongs to the shisa family. SHISA9 subfamily. As to quaternary structure, component of some AMPA receptors (ionotropic glutamate receptors) complex, at least composed of some AMPA receptor (GRIA1, GRIA2 and/or GRIA3), CACNG2 and SHISA9, as well as low level of DLG4. Brain-specific. Mainly expressed in neurons, including in hippocampus, cerebral cortex, striatum, thalamus, olfactory bulb and cerebellum. Expressed in most brain structures during embryonic and postnatal development.

The protein localises to the cell projection. It is found in the dendritic spine membrane. Its subcellular location is the synapse. Its function is as follows. Regulator of short-term neuronal synaptic plasticity in the dentate gyrus. Associates with AMPA receptors (ionotropic glutamate receptors) in synaptic spines and promotes AMPA receptor desensitization at excitatory synapses. This is Protein shisa-9 (Shisa9) from Mus musculus (Mouse).